We begin with the raw amino-acid sequence, 96 residues long: Cell division topological specificity factor (96 aa).

Belongs to the MinE family.

Its function is as follows. Prevents the cell division inhibition by proteins MinC and MinD at internal division sites while permitting inhibition at polar sites. This ensures cell division at the proper site by restricting the formation of a division septum at the midpoint of the long axis of the cell. The chain is Cell division topological specificity factor from Nitrosococcus oceani (strain ATCC 19707 / BCRC 17464 / JCM 30415 / NCIMB 11848 / C-107).